The chain runs to 180 residues: ATP synthase subunit delta (180 aa).

Belongs to the ATPase delta chain family. As to quaternary structure, F-type ATPases have 2 components, F(1) - the catalytic core - and F(0) - the membrane proton channel. F(1) has five subunits: alpha(3), beta(3), gamma(1), delta(1), epsilon(1). F(0) has three main subunits: a(1), b(2) and c(10-14). The alpha and beta chains form an alternating ring which encloses part of the gamma chain. F(1) is attached to F(0) by a central stalk formed by the gamma and epsilon chains, while a peripheral stalk is formed by the delta and b chains.

Its subcellular location is the cell membrane. F(1)F(0) ATP synthase produces ATP from ADP in the presence of a proton or sodium gradient. F-type ATPases consist of two structural domains, F(1) containing the extramembraneous catalytic core and F(0) containing the membrane proton channel, linked together by a central stalk and a peripheral stalk. During catalysis, ATP synthesis in the catalytic domain of F(1) is coupled via a rotary mechanism of the central stalk subunits to proton translocation. Functionally, this protein is part of the stalk that links CF(0) to CF(1). It either transmits conformational changes from CF(0) to CF(1) or is implicated in proton conduction. The chain is ATP synthase subunit delta from Dehalococcoides mccartyi (strain ATCC BAA-2266 / KCTC 15142 / 195) (Dehalococcoides ethenogenes (strain 195)).